We begin with the raw amino-acid sequence, 345 residues long: Nuclear distribution protein nudE-like 1 (345 aa).

The stretch at 28–190 (QSFQEARDEL…LAVRERQQEV (163 aa)) forms a coiled coil. The segment at 56–166 (VQAEQRNRDL…LDEKESLLVS (111 aa)) is self-association. Residues 64 to 189 (DLQADNQRLK…ELAVRERQQE (126 aa)) are interaction with KATNB1. A required for interaction with PAFAH1B1 region spans residues 114–133 (YVRELEQANDDLERAKRATI). Residues 175–345 (RDLRQELAVR…SAPGMLPLSV (171 aa)) are interaction with CENPF. Positions 189–256 (EVTRKSAPSS…SARISALNIV (68 aa)) are interaction with YWHAE. Residues 191–345 (TRKSAPSSPT…SAPGMLPLSV (155 aa)) are interaction with NEFL. The interval 195-256 (APSSPTLDCE…SARISALNIV (62 aa)) is interaction with KATNA1. Position 215 is a phosphoserine (serine 215). Threonine 219 is subject to Phosphothreonine; by CDK1 and MAPK1. Serine 231 bears the Phosphoserine mark. An interaction with DISC1 region spans residues 241 to 280 (TSPLTPSARISALNIVGDLLRKVGALESKLAACRNFAKDQ). Position 242 is a phosphoserine; by CDK1 (serine 242). Phosphothreonine; by CDK1 and MAPK1 is present on threonine 245. The required for localization to the centrosome and interaction with dynein, dynactin, tubulin gamma, PCM1 and PCNT stretch occupies residues 256–291 (VGDLLRKVGALESKLAACRNFAKDQASRKSYISGNV). Cysteine 273 carries S-palmitoyl cysteine; by ZDHHC2, ZDHHC3 and ZDHHC7 lipidation. Residues 315–345 (GAVNGFDPAPPPPGLGSSRPSSAPGMLPLSV) are disordered. Residues 329 to 339 (LGSSRPSSAPG) are compositionally biased toward low complexity. Serine 344 carries the phosphoserine modification.

It belongs to the nudE family. As to quaternary structure, interacts with PLEKHM1 (via N- and C-terminus). Interacts with YWHAE. Interacts directly with NEFL and indirectly with NEFH. Interacts with microtubules. Self-associates. Interacts with DISC1, dynein, dynactin, tubulin gamma, KATNA1, KATNB1, PAFAH1B1, PCM1 and PCNT. Interacts (via C-terminus) with CENPF. Interacts with ZNF365. Interacts with GTP-bound RAB9A; the interaction may lead to RAB9A-dynein motor tethering. Post-translationally, phosphorylated in mitosis. Can be phosphorylated by CDK1, CDK5 and MAPK1. Phosphorylation by CDK5 promotes interaction with KATNA1 and YWHAE. Palmitoylation at Cys-273 reduces affinity for dynein. As to expression, expressed in brain, heart, kidney, liver, lung, pancreas, placenta and skeletal muscle.

Its subcellular location is the cytoplasm. It localises to the cytoskeleton. The protein resides in the microtubule organizing center. It is found in the centrosome. The protein localises to the chromosome. Its subcellular location is the centromere. It localises to the kinetochore. The protein resides in the spindle. Required for organization of the cellular microtubule array and microtubule anchoring at the centrosome. May regulate microtubule organization at least in part by targeting the microtubule severing protein KATNA1 to the centrosome. Also positively regulates the activity of the minus-end directed microtubule motor protein dynein. May enhance dynein-mediated microtubule sliding by targeting dynein to the microtubule plus ends. Required for several dynein- and microtubule-dependent processes such as the maintenance of Golgi integrity, the centripetal motion of secretory vesicles and the coupling of the nucleus and centrosome. Also required during brain development for the migration of newly formed neurons from the ventricular/subventricular zone toward the cortical plate. Plays a role, together with DISC1, in the regulation of neurite outgrowth. Required for mitosis in some cell types but appears to be dispensible for mitosis in cortical neuronal progenitors, which instead requires NDE1. Facilitates the polymerization of neurofilaments from the individual subunits NEFH and NEFL. Positively regulates lysosome peripheral distribution and ruffled border formation in osteoclasts. Plays a role, together with DISC1, in the regulation of neurite outgrowth. May act as a RAB9A/B effector that tethers RAB9-associated late endosomes to the dynein motor for their retrograde transport to the trans-Golgi network. In Homo sapiens (Human), this protein is Nuclear distribution protein nudE-like 1 (NDEL1).